The sequence spans 190 residues: GTP cyclohydrolase 1 (190 aa).

Zn(2+) is bound by residues C75, H78, and C146.

Belongs to the GTP cyclohydrolase I family. Toroid-shaped homodecamer, composed of two pentamers of five dimers.

The enzyme catalyses GTP + H2O = 7,8-dihydroneopterin 3'-triphosphate + formate + H(+). Its pathway is cofactor biosynthesis; 7,8-dihydroneopterin triphosphate biosynthesis; 7,8-dihydroneopterin triphosphate from GTP: step 1/1. The sequence is that of GTP cyclohydrolase 1 from Campylobacter jejuni subsp. jejuni serotype O:23/36 (strain 81-176).